Reading from the N-terminus, the 49-residue chain is Large ribosomal subunit protein bL33A (49 aa).

Belongs to the bacterial ribosomal protein bL33 family.

In Mycoplasmopsis agalactiae (strain NCTC 10123 / CIP 59.7 / PG2) (Mycoplasma agalactiae), this protein is Large ribosomal subunit protein bL33A.